The chain runs to 663 residues: Translation factor guf1, mitochondrial (663 aa).

Residues 1–51 (MRGCLQVLRWLSTSTARRPVSSRPLHEIFPKSEFRRPFTSTILRQAQASRN) constitute a mitochondrion transit peptide. The 181-residue stretch at 65-245 (ERFRNFCIVA…TVIERIPAPV (181 aa)) folds into the tr-type G domain. GTP is bound by residues 74-81 (AHVDHGKS), 138-142 (DTPGH), and 192-195 (NKVD).

It belongs to the TRAFAC class translation factor GTPase superfamily. Classic translation factor GTPase family. LepA subfamily.

Its subcellular location is the mitochondrion inner membrane. The enzyme catalyses GTP + H2O = GDP + phosphate + H(+). Its function is as follows. Promotes mitochondrial protein synthesis. May act as a fidelity factor of the translation reaction, by catalyzing a one-codon backward translocation of tRNAs on improperly translocated ribosomes. Binds to mitochondrial ribosomes in a GTP-dependent manner. In Talaromyces marneffei (strain ATCC 18224 / CBS 334.59 / QM 7333) (Penicillium marneffei), this protein is Translation factor guf1, mitochondrial (guf1).